A 119-amino-acid chain; its full sequence is Odin profilin (119 aa).

This sequence belongs to the Asgard profilin family.

The protein localises to the cytoplasm. The protein resides in the cytoskeleton. Its activity is regulated as follows. Inhibition of rabbit actin polymerization is reduced by phosphatidylinositol-(4,5)-P2(1,2-dipalmitoyl), a soluble form of the phospholipid phosphatidylinositol, suggesting an unknown lipid might regulate actin-profilin interaction in vivo. Binds to actin and affects the structure of the cytoskeleton. At high concentrations inhibits spontaneous rabbit actin nucleation. This strongly suggests this archaea has a profilin-regulated actin system, and actin-type genes can be identified in this organism. This chain is Odin profilin, found in Odinarchaeota yellowstonii (strain LCB_4).